A 223-amino-acid polypeptide reads, in one-letter code: MSEDRELQALLRLTAWLSPAFPIGSFAYSGGLERAVADGLVTDAASLANWIGTLIGHGSVWNDAVLLTESHRRQAEAPGLAEIAALAEALAGSRERHQETMLLGEAFLLAARAWPDEVFERLPGKTAYPIAVGAVAGAHGIGPEKVLAVFLHAYASQAVSSGIRLGVAGQKDGVAVLAGLEEQIAGTARRAAASTLDDLGSATVQADIASLRHETQTTRLFRS.

The protein belongs to the UreF family. In terms of assembly, ureD, UreF and UreG form a complex that acts as a GTP-hydrolysis-dependent molecular chaperone, activating the urease apoprotein by helping to assemble the nickel containing metallocenter of UreC. The UreE protein probably delivers the nickel.

The protein localises to the cytoplasm. Its function is as follows. Required for maturation of urease via the functional incorporation of the urease nickel metallocenter. This is Urease accessory protein UreF from Rhizobium etli (strain ATCC 51251 / DSM 11541 / JCM 21823 / NBRC 15573 / CFN 42).